The following is a 226-amino-acid chain: Uracil-DNA glycosylase (226 aa).

Residue Asp-64 is the Proton acceptor of the active site.

The protein belongs to the uracil-DNA glycosylase (UDG) superfamily. UNG family.

It localises to the cytoplasm. It carries out the reaction Hydrolyzes single-stranded DNA or mismatched double-stranded DNA and polynucleotides, releasing free uracil.. Functionally, excises uracil residues from the DNA which can arise as a result of misincorporation of dUMP residues by DNA polymerase or due to deamination of cytosine. The protein is Uracil-DNA glycosylase of Photorhabdus laumondii subsp. laumondii (strain DSM 15139 / CIP 105565 / TT01) (Photorhabdus luminescens subsp. laumondii).